A 184-amino-acid chain; its full sequence is Cytidylate kinase (184 aa).

8–16 (GQPGSGKTT) is an ATP binding site.

It belongs to the cytidylate kinase family. Type 2 subfamily.

The protein localises to the cytoplasm. It catalyses the reaction CMP + ATP = CDP + ADP. The enzyme catalyses dCMP + ATP = dCDP + ADP. This chain is Cytidylate kinase, found in Pyrobaculum calidifontis (strain DSM 21063 / JCM 11548 / VA1).